A 273-amino-acid polypeptide reads, in one-letter code: MATQALISSSSISTSAEAARQIIGSRISQSVTRKASFVVRAASTPPVKQGANRQLWFASKQSLSYLDGRLPGDFGFDPLGLSDPEGTGGFIEPKWLAYGEVINGRFAMLGAAGAIAPEILGKAGLIPQETALAWFQTGVIPPAGTYNYWADNYTLFVLEMALMGFAEHRRFQDWAKPGSMGKQYFLGLEKGLGGSGDPAYPGGPLFNPLGFGKDEKSMKELKLKEIKNGRLAMLAILGYFIQALVTGVGPYQNLLDHLADPVNNNVLTSLKFH.

The transit peptide at Met-1–Thr-32 directs the protein to the chloroplast. Residue Arg-33 is modified to N2-acetylarginine. Trp-56 lines the chlorophyll b pocket. The chlorophyll a site is built by Phe-76, Ser-82, and Glu-100. Arg-105 serves as a coordination point for chlorophyll b. The helical transmembrane segment at Phe-106 to Ile-126 threads the bilayer. Ile-140, Glu-167, and Arg-170 together coordinate chlorophyll b. Positions 224, 225, 228, 230, 242, and 257 each coordinate chlorophyll a. A helical membrane pass occupies residues Leu-231–Tyr-251.

It belongs to the light-harvesting chlorophyll a/b-binding (LHC) protein family. As to quaternary structure, the LHC complex consists of chlorophyll a-b binding proteins. It depends on Binds at least 14 chlorophylls (8 Chl-a and 6 Chl-b) and carotenoids such as lutein and neoxanthin. as a cofactor. In terms of processing, photoregulated by reversible phosphorylation of its threonine residues.

Its subcellular location is the plastid. The protein localises to the chloroplast thylakoid membrane. Its function is as follows. The light-harvesting complex (LHC) functions as a light receptor, it captures and delivers excitation energy to photosystems with which it is closely associated. This is Chlorophyll a-b binding protein 8, chloroplastic (CAB8) from Solanum lycopersicum (Tomato).